The following is a 351-amino-acid chain: Cytoplasmic dynein 2 light intermediate chain 1 (351 aa).

Positions 304-351 (TLKDVKDPAKDPQYAESEVDEMRIQKDQELEQYKRSSSKSWKQIELDS) are disordered. The segment covering 323–337 (DEMRIQKDQELEQYK) has biased composition (basic and acidic residues).

The protein belongs to the dynein light intermediate chain family. Light intermediate chain of the cytoplasmic dynein complex 2, a multisubunit complex composed at least of eleven different proteins. The cytoplasmic dynein 2 complex consists of two catalytic heavy chains (HCs) and a number of non-catalytic subunits presented by intermediate chains (ICs), light intermediate chains (LICs) and light chains (LCs). Among them, a heavy chain (DYNC2H1), two intermediate chains (DYNC2I2 and DYNC2I1), a light intermediate chain (DYNC2LI1), and a light chain (DYNLT2B) are unique to the dynein-2 complex, but a subset of light chains are also shared by dynein-1 and dynein-2 complexes. Dynein-2 complex is built around two copies of cytoplasmic dynein 2 heavy chain 1 (DYNC2H1). The C-terminal region forms the motor domain, which converts the energy from ATP hydrolysis into movement. Its N-terminal region forms the tail, an extended structure that binds the other subunits and holds the two heavy chains in a homodimer. Interacts with DYNC2H1 (via N-terminus); this interaction stabilizes the dynein-2 complex structure.

It localises to the cytoplasm. The protein localises to the cell projection. The protein resides in the cilium. Its subcellular location is the cytoskeleton. It is found in the cilium basal body. It localises to the cilium axoneme. The protein localises to the microtubule organizing center. The protein resides in the centrosome. Functionally, acts as one of several non-catalytic accessory components of the cytoplasmic dynein 2 complex (dynein-2 complex), a motor protein complex that drives the movement of cargos along microtubules within cilia and flagella in concert with the intraflagellar transport (IFT) system, facilitating the assembly of these organelles. Involved in the regulation of ciliary length. In Bos taurus (Bovine), this protein is Cytoplasmic dynein 2 light intermediate chain 1 (DYNC2LI1).